The chain runs to 24 residues: M-ectatotoxin-Eb2b (24 aa).

In terms of tissue distribution, expressed by the venom gland.

It localises to the secreted. Antimicrobial peptide active against Gram-negative bacterium E.coli MH1 (MIC=2.5 uM) and P.aeruginosa PAO1 (MIC=10 uM) and against Gram-positive bacterium A.globiformis VKM Ac-1112 (MIC=0.6 uM). In Ectatomma brunneum (Ant), this protein is M-ectatotoxin-Eb2b.